The following is a 314-amino-acid chain: uncharacterized protein (314 aa).

Positions 1-70 (MAGNSQRRGA…QGRHKKTDDT (70 aa)) are disordered. Over residues 43–65 (QRPHHPAGKRAAKAARQAQGRHK) the composition is skewed to basic residues. Gly-265, Ile-285, and Leu-294 together coordinate S-adenosyl-L-methionine.

This sequence belongs to the class IV-like SAM-binding methyltransferase superfamily. RNA methyltransferase TrmH family.

This is an uncharacterized protein from Mycolicibacterium vanbaalenii (strain DSM 7251 / JCM 13017 / BCRC 16820 / KCTC 9966 / NRRL B-24157 / PYR-1) (Mycobacterium vanbaalenii).